We begin with the raw amino-acid sequence, 345 residues long: Biotin synthase (345 aa).

The 228-residue stretch at 39–266 (NEVQVSTLLS…ASHVRLSAGR (228 aa)) folds into the Radical SAM core domain. Residues Cys-54, Cys-58, and Cys-61 each coordinate [4Fe-4S] cluster. Residues Cys-98, Cys-129, Cys-189, and Arg-261 each coordinate [2Fe-2S] cluster.

This sequence belongs to the radical SAM superfamily. Biotin synthase family. Homodimer. Requires [4Fe-4S] cluster as cofactor. [2Fe-2S] cluster serves as cofactor.

The enzyme catalyses (4R,5S)-dethiobiotin + (sulfur carrier)-SH + 2 reduced [2Fe-2S]-[ferredoxin] + 2 S-adenosyl-L-methionine = (sulfur carrier)-H + biotin + 2 5'-deoxyadenosine + 2 L-methionine + 2 oxidized [2Fe-2S]-[ferredoxin]. Its pathway is cofactor biosynthesis; biotin biosynthesis; biotin from 7,8-diaminononanoate: step 2/2. Catalyzes the conversion of dethiobiotin (DTB) to biotin by the insertion of a sulfur atom into dethiobiotin via a radical-based mechanism. The sequence is that of Biotin synthase from Idiomarina loihiensis (strain ATCC BAA-735 / DSM 15497 / L2-TR).